Reading from the N-terminus, the 421-residue chain is Exopolysaccharide production protein ExoF (421 aa).

Residues 1 to 31 (MQSNRRSGKSAGSRMVSCFTRLALLAALAAS) form the signal peptide.

It localises to the periplasm. The protein operates within glycan metabolism; exopolysaccharide biosynthesis. In terms of biological role, involved in succinoglycan (EPS I) synthesis. Needed for the addition of the first sugar (galactose) to the isoprenoid carrier. The chain is Exopolysaccharide production protein ExoF (exoF) from Rhizobium meliloti (strain 1021) (Ensifer meliloti).